We begin with the raw amino-acid sequence, 329 residues long: GTPase Obg (329 aa).

An Obg domain is found at 1-159 (MQFIDQAIID…WSLQLELKLL (159 aa)). Positions 160 to 328 (AEVGIIGLPN…LLSSIWNELG (169 aa)) constitute an OBG-type G domain. ATP contacts are provided by residues 166–173 (GLPNAGKS), 191–195 (FTTLI), 213–216 (DIPG), 280–283 (NKKE), and 309–311 (SAV). Mg(2+) contacts are provided by serine 173 and threonine 193.

It belongs to the TRAFAC class OBG-HflX-like GTPase superfamily. OBG GTPase family. As to quaternary structure, monomer. Mg(2+) is required as a cofactor.

The protein localises to the cytoplasm. In terms of biological role, an essential GTPase which binds GTP, GDP and possibly (p)ppGpp with moderate affinity, with high nucleotide exchange rates and a fairly low GTP hydrolysis rate. Plays a role in control of the cell cycle, stress response, ribosome biogenesis and in those bacteria that undergo differentiation, in morphogenesis control. This Prochlorococcus marinus (strain NATL2A) protein is GTPase Obg.